A 263-amino-acid chain; its full sequence is Hydroxyacylglutathione hydrolase (263 aa).

Zn(2+) contacts are provided by H60, H62, D64, H65, H120, D137, and H175.

This sequence belongs to the metallo-beta-lactamase superfamily. Glyoxalase II family. Monomer. The cofactor is Zn(2+).

The enzyme catalyses an S-(2-hydroxyacyl)glutathione + H2O = a 2-hydroxy carboxylate + glutathione + H(+). The protein operates within secondary metabolite metabolism; methylglyoxal degradation; (R)-lactate from methylglyoxal: step 2/2. Thiolesterase that catalyzes the hydrolysis of S-D-lactoyl-glutathione to form glutathione and D-lactic acid. This chain is Hydroxyacylglutathione hydrolase, found in Shewanella pealeana (strain ATCC 700345 / ANG-SQ1).